Consider the following 341-residue polypeptide: ATPase GET3 (341 aa).

34–41 (KGGVGKTT) provides a ligand contact to ATP. The active site involves aspartate 63. Positions 245 and 272 each coordinate ATP. Zn(2+) contacts are provided by cysteine 283 and cysteine 286.

Belongs to the arsA ATPase family. As to quaternary structure, homodimer.

Its subcellular location is the cytoplasm. It localises to the endoplasmic reticulum. Its function is as follows. ATPase required for the post-translational delivery of tail-anchored (TA) proteins to the endoplasmic reticulum. Recognizes and selectively binds the transmembrane domain of TA proteins in the cytosol. This complex then targets to the endoplasmic reticulum by membrane-bound receptors, where the tail-anchored protein is released for insertion. This process is regulated by ATP binding and hydrolysis. ATP binding drives the homodimer towards the closed dimer state, facilitating recognition of newly synthesized TA membrane proteins. ATP hydrolysis is required for insertion. Subsequently, the homodimer reverts towards the open dimer state, lowering its affinity for the membrane-bound receptor, and returning it to the cytosol to initiate a new round of targeting. This is ATPase GET3 from Ajellomyces dermatitidis (strain ER-3 / ATCC MYA-2586) (Blastomyces dermatitidis).